We begin with the raw amino-acid sequence, 488 residues long: Probable 26S proteasome non-ATPase regulatory subunit 3 (488 aa).

Residues 1–20 form a disordered region; the sequence is MTQDVEMKEQAAPPSNSLSS. Residues 240–421 enclose the PCI domain; that stretch reads SRYLFYLGKI…GWMVSKETGD (182 aa). Residues 452–488 form a disordered region; that stretch reads FPPNSHKEKESAEKRRERQQQEQELAKHIAEEDDDDF. A compositionally biased stretch (basic and acidic residues) spans 456–481; the sequence is SHKEKESAEKRRERQQQEQELAKHIA.

This sequence belongs to the proteasome subunit S3 family. As to quaternary structure, the 26S proteasome is composed of a core protease, known as the 20S proteasome, capped at one or both ends by the 19S regulatory complex (RC). The RC is composed of at least 18 different subunits in two subcomplexes, the base and the lid, which form the portions proximal and distal to the 20S proteolytic core, respectively.

It localises to the nucleus. Functionally, acts as a regulatory subunit of the 26 proteasome which is involved in the ATP-dependent degradation of ubiquitinated proteins. In Nicotiana tabacum (Common tobacco), this protein is Probable 26S proteasome non-ATPase regulatory subunit 3 (21D7).